The chain runs to 564 residues: uncharacterized protein (564 aa).

A run of 8 helical transmembrane segments spans residues 12 to 32, 97 to 119, 139 to 161, 188 to 208, 213 to 233, 277 to 297, 306 to 326, and 348 to 368; these read TYYL…LFIL, MTAY…YVLL, AFAL…LALW, FVLG…YDAI, WNLM…FVEY, MTVH…ALLF, NVYL…AFWF, and FHFL…YLIW.

It localises to the cell membrane. This is an uncharacterized protein from Bacillus subtilis (strain 168).